The following is a 143-amino-acid chain: Large ribosomal subunit protein uL13 (143 aa).

The protein belongs to the universal ribosomal protein uL13 family. In terms of assembly, part of the 50S ribosomal subunit.

Functionally, this protein is one of the early assembly proteins of the 50S ribosomal subunit, although it is not seen to bind rRNA by itself. It is important during the early stages of 50S assembly. This is Large ribosomal subunit protein uL13 from Methanosarcina acetivorans (strain ATCC 35395 / DSM 2834 / JCM 12185 / C2A).